The following is a 463-amino-acid chain: MTTETRSLYSQLPAIDRLLRDSSFLSLRDTYGHTRVVELLRQMLDEAREVIRDSQTLPAWCENWAQEVDARLTKEAQSALRPVINLTGTVLHTNLGRALQAEAAVEAVTKAMRSPVTLEYDLDDAGRGHRDRALAQLLCRITGAEDACIVNNNAAAVLLMLAATASGKEVVVSRGELVEIGGAFRIPDVMRQAGCTLHEVGTTNRTHANDYRQAVNENTALLMKVHTSNYSIQGFTKAIDEAELVALGKELDVPVVTDLGSGSLVDLSQYGLPKEPMPQELIAAGVSLVSFSGDKLLGGPQAGIIVGKKEMIARLQSHPLKRALRADKMTLAALEATLRLYLHPEALSEKLPTLRLLTRSAEVIQIQAQRLQAPLAAHYGAEFAVQVMPCLSQIGSGSLPVDRLPSAALTFTPHDGRGSHLESLAARWRELPVPVIGRIYDGRLWLDLRCLEDEQRFLEMLLK.

K295 bears the N6-(pyridoxal phosphate)lysine mark.

Belongs to the SelA family. In terms of assembly, homodecamer; pentamer of dimers. Binds only one seryl-tRNA(Sec) per dimer. Pyridoxal 5'-phosphate is required as a cofactor.

It is found in the cytoplasm. It carries out the reaction L-seryl-tRNA(Sec) + selenophosphate + H(+) = L-selenocysteinyl-tRNA(Sec) + phosphate. It participates in aminoacyl-tRNA biosynthesis; selenocysteinyl-tRNA(Sec) biosynthesis; selenocysteinyl-tRNA(Sec) from L-seryl-tRNA(Sec) (bacterial route): step 1/1. Functionally, converts seryl-tRNA(Sec) to selenocysteinyl-tRNA(Sec) required for selenoprotein biosynthesis. The sequence is that of L-seryl-tRNA(Sec) selenium transferase from Escherichia coli O6:H1 (strain CFT073 / ATCC 700928 / UPEC).